A 195-amino-acid polypeptide reads, in one-letter code: ATP-dependent Clp protease proteolytic subunit (195 aa).

The active-site Nucleophile is the Ser-97. His-122 is a catalytic residue.

It belongs to the peptidase S14 family. In terms of assembly, fourteen ClpP subunits assemble into 2 heptameric rings which stack back to back to give a disk-like structure with a central cavity, resembling the structure of eukaryotic proteasomes.

Its subcellular location is the cytoplasm. The catalysed reaction is Hydrolysis of proteins to small peptides in the presence of ATP and magnesium. alpha-casein is the usual test substrate. In the absence of ATP, only oligopeptides shorter than five residues are hydrolyzed (such as succinyl-Leu-Tyr-|-NHMec, and Leu-Tyr-Leu-|-Tyr-Trp, in which cleavage of the -Tyr-|-Leu- and -Tyr-|-Trp bonds also occurs).. Cleaves peptides in various proteins in a process that requires ATP hydrolysis. Has a chymotrypsin-like activity. Plays a major role in the degradation of misfolded proteins. The sequence is that of ATP-dependent Clp protease proteolytic subunit from Lactobacillus acidophilus (strain ATCC 700396 / NCK56 / N2 / NCFM).